The sequence spans 1486 residues: Chromosome partition protein MukB (1486 aa).

34 to 41 (GGNGAGKS) provides a ligand contact to ATP. Coiled coils occupy residues 326–418 (LEAD…QYNQ), 444–480 (LETFQAKELEATEKMLSLEQKMSMAQTAHSQFEQAYQ), and 509–603 (RHLA…RAPV). Residues 666-783 (PGGSEDQRLN…EVPLFGRAAR (118 aa)) form a flexible hinge region. Coiled-coil stretches lie at residues 835–923 (EAEI…AKLE), 977–1115 (EMLS…TAKA), and 1209–1266 (VEAI…QNVS).

This sequence belongs to the SMC family. MukB subfamily. Homodimerization via its hinge domain. Binds to DNA via its C-terminal region. Interacts, and probably forms a ternary complex, with MukE and MukF via its C-terminal region. The complex formation is stimulated by calcium or magnesium. Interacts with tubulin-related protein FtsZ.

It localises to the cytoplasm. The protein resides in the nucleoid. In terms of biological role, plays a central role in chromosome condensation, segregation and cell cycle progression. Functions as a homodimer, which is essential for chromosome partition. Involved in negative DNA supercoiling in vivo, and by this means organize and compact chromosomes. May achieve or facilitate chromosome segregation by condensation DNA from both sides of a centrally located replisome during cell division. The sequence is that of Chromosome partition protein MukB from Escherichia coli (strain K12 / MC4100 / BW2952).